The primary structure comprises 467 residues: tRNA modification GTPase MnmE (467 aa).

Residues Arg25, Glu87, and Lys130 each contribute to the (6S)-5-formyl-5,6,7,8-tetrahydrofolate site. Residues 226–389 form the TrmE-type G domain; that stretch reads GLSVVLAGQP…LRGELLRIAG (164 aa). Residue Asn236 participates in K(+) binding. Residues 236–241, 255–261, and 280–283 contribute to the GTP site; these read NVGKSS, TPIAGTT, and DTAG. Position 240 (Ser240) interacts with Mg(2+). K(+)-binding residues include Thr255, Ile257, and Thr260. Thr261 serves as a coordination point for Mg(2+). Residue Lys467 coordinates (6S)-5-formyl-5,6,7,8-tetrahydrofolate.

It belongs to the TRAFAC class TrmE-Era-EngA-EngB-Septin-like GTPase superfamily. TrmE GTPase family. Homodimer. Heterotetramer of two MnmE and two MnmG subunits. K(+) is required as a cofactor.

It localises to the cytoplasm. In terms of biological role, exhibits a very high intrinsic GTPase hydrolysis rate. Involved in the addition of a carboxymethylaminomethyl (cmnm) group at the wobble position (U34) of certain tRNAs, forming tRNA-cmnm(5)s(2)U34. This chain is tRNA modification GTPase MnmE, found in Burkholderia mallei (strain NCTC 10247).